Reading from the N-terminus, the 329-residue chain is Prostaglandin reductase 1 (329 aa).

At Thr-18 the chain carries Phosphothreonine. Ser-20 is subject to Phosphoserine. NADP(+)-binding positions include 152 to 155 (GAVG), Lys-178, Tyr-193, Asn-217, 239 to 245 (CGAISTY), 270 to 272 (FVV), and Asn-321. Residue Lys-178 is modified to N6-(2-hydroxyisobutyryl)lysine; alternate. Lys-178 carries the post-translational modification N6-acetyllysine; alternate.

Belongs to the NADP-dependent oxidoreductase L4BD family. As to quaternary structure, monomer or homodimer. In terms of tissue distribution, high expression in the kidney, liver, and intestine but not in leukocytes.

Its subcellular location is the cytoplasm. The enzyme catalyses 13,14-dihydro-15-oxo-prostaglandin E1 + NADP(+) = 15-oxoprostaglandin E1 + NADPH + H(+). It catalyses the reaction 13,14-dihydro-15-oxo-prostaglandin E2 + NADP(+) = 15-oxoprostaglandin E2 + NADPH + H(+). It carries out the reaction 13,14-dihydro-15-oxo-prostaglandin F1alpha + NADP(+) = 15-oxoprostaglandin F1alpha + NADPH + H(+). The catalysed reaction is 13,14-dihydro-15-oxo-PGF2alpha + NADP(+) = 15-oxoprostaglandin F2alpha + NADPH + H(+). The enzyme catalyses leukotriene B4 + NADP(+) = 12-oxo-leukotriene B4 + NADPH + H(+). It catalyses the reaction 20-hydroxy-leukotriene B4 + NADP(+) = 12-oxo-20-hydroxy-leukotriene B4 + NADPH + H(+). It carries out the reaction 6-trans-leukotriene B4 + NADP(+) = 12-oxo-(5S)-hydroxy-(6E,8E,10E,14Z)-eicosatetraenoate + NADPH + H(+). The catalysed reaction is (5S,12S)-dihydroxy-(6E,10E,12E,14Z)-eicosatetraenoate + NADP(+) = 12-oxo-(5S)-hydroxy-(6E,8E,10E,14Z)-eicosatetraenoate + NADPH + H(+). The enzyme catalyses an n-alkanal + NADP(+) = an alk-2-enal + NADPH + H(+). It catalyses the reaction hexanal + NADP(+) = (E)-hex-2-enal + NADPH + H(+). It carries out the reaction octanal + NADP(+) = (2E)-octenal + NADPH + H(+). The catalysed reaction is decanal + NADP(+) = (2E)-decenal + NADPH + H(+). The enzyme catalyses dodecanal + NADP(+) = (2E)-dodecenal + NADPH + H(+). It catalyses the reaction 4-hydroxynonanal + NADP(+) = (E)-4-hydroxynon-2-enal + NADPH + H(+). It carries out the reaction pentan-2-one + NADP(+) = (E)-pent-3-en-2-one + NADPH + H(+). The catalysed reaction is nonan-2-one + NADP(+) = (3E)-nonen-2-one + NADPH + H(+). NAD(P)H-dependent oxidoreductase involved in metabolic inactivation of pro- and anti-inflammatory eicosanoids: prostaglandins (PG), leukotrienes (LT) and lipoxins (LX). Catalyzes with high efficiency the reduction of the 13,14 double bond of 15-oxoPGs, including 15-oxo-PGE1, 15-oxo-PGE2, 15-oxo-PGF1-alpha and 15-oxo-PGF2-alpha. Catalyzes with lower efficiency the oxidation of the hydroxyl group at C12 of LTB4 and its derivatives, converting them into biologically less active 12-oxo-LTB4 metabolites. Reduces 15-oxo-LXA4 to 13,14 dihydro-15-oxo-LXA4, enhancing neutrophil recruitment at the inflammatory site. May play a role in metabolic detoxification of alkenals and ketones. Reduces alpha,beta-unsaturated alkenals and ketones, particularly those with medium-chain length, showing highest affinity toward (2E)-decenal and (3E)-3-nonen-2-one. May inactivate 4-hydroxy-2-nonenal, a cytotoxic lipid constituent of oxidized low-density lipoprotein particles. This Homo sapiens (Human) protein is Prostaglandin reductase 1 (PTGR1).